The primary structure comprises 96 residues: Large ribosomal subunit protein eL14 (96 aa).

The protein belongs to the eukaryotic ribosomal protein eL14 family.

The polypeptide is Large ribosomal subunit protein eL14 (Sulfurisphaera tokodaii (strain DSM 16993 / JCM 10545 / NBRC 100140 / 7) (Sulfolobus tokodaii)).